A 181-amino-acid polypeptide reads, in one-letter code: Ribulose bisphosphate carboxylase small subunit, chloroplastic (181 aa).

The transit peptide at 1-56 (MASISSSAIATVNRTTSTQASLAAPFTGLKSNVAFPVTKKANNDFSSLPSNGGRVQ) directs the protein to the chloroplast.

This sequence belongs to the RuBisCO small chain family. In terms of assembly, heterohexadecamer of 8 large and 8 small subunits.

The protein resides in the plastid. It is found in the chloroplast. Functionally, ruBisCO catalyzes two reactions: the carboxylation of D-ribulose 1,5-bisphosphate, the primary event in carbon dioxide fixation, as well as the oxidative fragmentation of the pentose substrate. Both reactions occur simultaneously and in competition at the same active site. Although the small subunit is not catalytic it is essential for maximal activity. This Lactuca sativa (Garden lettuce) protein is Ribulose bisphosphate carboxylase small subunit, chloroplastic.